The chain runs to 360 residues: Serine/threonine transporter SstT (360 aa).

A run of 9 helical transmembrane segments spans residues 17-37 (IGIG…ITVI), 40-60 (FGSL…LTLV), 78-98 (VICL…GASY), 138-158 (ALAT…GLAF), 179-199 (VVGW…FDTI), 212-232 (LLLL…NPLI), 295-315 (MAGA…TLGI), 316-336 (SVDF…AAGA), and 339-359 (VAGG…VPYV).

Belongs to the dicarboxylate/amino acid:cation symporter (DAACS) (TC 2.A.23) family.

It localises to the cell membrane. The catalysed reaction is L-serine(in) + Na(+)(in) = L-serine(out) + Na(+)(out). It carries out the reaction L-threonine(in) + Na(+)(in) = L-threonine(out) + Na(+)(out). In terms of biological role, involved in the import of serine and threonine into the cell, with the concomitant import of sodium (symport system). In Streptococcus suis (strain 05ZYH33), this protein is Serine/threonine transporter SstT.